The primary structure comprises 182 residues: Adenylate kinase (182 aa).

An ATP-binding site is contributed by 12-17 (GAGKGT). The interval 32 to 61 (STGELLRKEIDLDTYLGKQVKDIMNKGELV) is NMP. Residues threonine 33, arginine 38, 59–61 (ELV), 85–88 (GYPR), and glutamine 92 each bind AMP. The interval 126 to 132 (LRGRKDD) is LID. Arginine 127 lines the ATP pocket. Residues arginine 129 and arginine 140 each contribute to the AMP site. Glycine 168 is a binding site for ATP.

Belongs to the adenylate kinase family. In terms of assembly, monomer.

The protein localises to the cytoplasm. It catalyses the reaction AMP + ATP = 2 ADP. Its pathway is purine metabolism; AMP biosynthesis via salvage pathway; AMP from ADP: step 1/1. In terms of biological role, catalyzes the reversible transfer of the terminal phosphate group between ATP and AMP. Plays an important role in cellular energy homeostasis and in adenine nucleotide metabolism. In Prochlorococcus marinus (strain MIT 9515), this protein is Adenylate kinase.